A 245-amino-acid chain; its full sequence is MLIIPAIDLKDGACVRLRQGRMEDSTVFSDDPVSMAAKWVEGGCRRLHLVDLNGAFEGQPVNGEVVTAIAKRYPNLPIQIGGGIRSLETIEHYVKAGVSYVIIGTKAVKQPEFVAEACKAFPGKVIVGLDAKDGFVATDGWAEVSSVQVIDLAKRFEADGVSAIVYTDIAKDGMMQGCNVPFTKALAEATRIPVIASGGIHNLGDIKALLDAKAPGIIGAITGRAIYEGTLDVAEAQAFCDNYQG.

The Proton acceptor role is filled by aspartate 8. Residue aspartate 130 is the Proton donor of the active site.

It belongs to the HisA/HisF family.

It localises to the cytoplasm. The catalysed reaction is 1-(5-phospho-beta-D-ribosyl)-5-[(5-phospho-beta-D-ribosylamino)methylideneamino]imidazole-4-carboxamide = 5-[(5-phospho-1-deoxy-D-ribulos-1-ylimino)methylamino]-1-(5-phospho-beta-D-ribosyl)imidazole-4-carboxamide. Its pathway is amino-acid biosynthesis; L-histidine biosynthesis; L-histidine from 5-phospho-alpha-D-ribose 1-diphosphate: step 4/9. In Pseudomonas putida (strain ATCC 47054 / DSM 6125 / CFBP 8728 / NCIMB 11950 / KT2440), this protein is 1-(5-phosphoribosyl)-5-[(5-phosphoribosylamino)methylideneamino] imidazole-4-carboxamide isomerase.